The chain runs to 547 residues: Chaperonin GroEL (547 aa).

ATP is bound by residues 30-33, K51, 87-91, G415, and D496; these read TLGP and DGTTT.

This sequence belongs to the chaperonin (HSP60) family. Forms a cylinder of 14 subunits composed of two heptameric rings stacked back-to-back. Interacts with the co-chaperonin GroES.

Its subcellular location is the cytoplasm. The catalysed reaction is ATP + H2O + a folded polypeptide = ADP + phosphate + an unfolded polypeptide.. Functionally, together with its co-chaperonin GroES, plays an essential role in assisting protein folding. The GroEL-GroES system forms a nano-cage that allows encapsulation of the non-native substrate proteins and provides a physical environment optimized to promote and accelerate protein folding. The chain is Chaperonin GroEL from Histophilus somni (strain 129Pt) (Haemophilus somnus).